The primary structure comprises 326 residues: Zona pellucida-binding protein 2 (326 aa).

The signal sequence occupies residues 1 to 19 (MLAWALLYAVLWSLAGVGS). Asn-86, Asn-220, and Asn-256 each carry an N-linked (GlcNAc...) asparagine glycan.

Belongs to the zona pellucida-binding protein Sp38 family. N-glycosylated. As to expression, expressed specifically in male germ cells.

The protein resides in the cytoplasmic vesicle. It is found in the secretory vesicle. Its subcellular location is the acrosome. It localises to the secreted. Functionally, is implicated in sperm-oocyte interaction during fertilization. The chain is Zona pellucida-binding protein 2 (Zpbp2) from Mus musculus (Mouse).